Consider the following 41-residue polypeptide: Large ribosomal subunit protein bL36 (41 aa).

The protein belongs to the bacterial ribosomal protein bL36 family.

This is Large ribosomal subunit protein bL36 from Hydrogenovibrio crunogenus (strain DSM 25203 / XCL-2) (Thiomicrospira crunogena).